Consider the following 158-residue polypeptide: Sec-independent protein translocase protein TatB (158 aa).

Residues 1-21 (MFDIGWSELLVIGVVALVVVG) form a helical membrane-spanning segment. The segment at 73 to 158 (RSMGLDAMKQ…PAPAEPKSNA (86 aa)) is disordered. The span at 83–92 (AADRFEKWDP) shows a compositional bias: basic and acidic residues. 2 stretches are compositionally biased toward low complexity: residues 94 to 132 (KPQQGAPKPAAPASSIPAAKAQQGAGAAAVTAPPASEPA) and 138 to 158 (APAAAAPEAASPAPAEPKSNA).

This sequence belongs to the TatB family. In terms of assembly, the Tat system comprises two distinct complexes: a TatABC complex, containing multiple copies of TatA, TatB and TatC subunits, and a separate TatA complex, containing only TatA subunits. Substrates initially bind to the TatABC complex, which probably triggers association of the separate TatA complex to form the active translocon.

The protein localises to the cell inner membrane. In terms of biological role, part of the twin-arginine translocation (Tat) system that transports large folded proteins containing a characteristic twin-arginine motif in their signal peptide across membranes. Together with TatC, TatB is part of a receptor directly interacting with Tat signal peptides. TatB may form an oligomeric binding site that transiently accommodates folded Tat precursor proteins before their translocation. This is Sec-independent protein translocase protein TatB from Cereibacter sphaeroides (strain ATCC 17029 / ATH 2.4.9) (Rhodobacter sphaeroides).